The following is a 106-amino-acid chain: Iron-sulfur cluster assembly protein CyaY (106 aa).

Belongs to the frataxin family.

In terms of biological role, involved in iron-sulfur (Fe-S) cluster assembly. May act as a regulator of Fe-S biogenesis. The chain is Iron-sulfur cluster assembly protein CyaY from Escherichia coli O127:H6 (strain E2348/69 / EPEC).